A 160-amino-acid polypeptide reads, in one-letter code: Cyclic pyranopterin monophosphate synthase (160 aa).

Substrate contacts are provided by residues 75 to 77 (LCH) and 113 to 114 (ME). Residue Asp128 is part of the active site.

This sequence belongs to the MoaC family. In terms of assembly, homohexamer; trimer of dimers.

The enzyme catalyses (8S)-3',8-cyclo-7,8-dihydroguanosine 5'-triphosphate = cyclic pyranopterin phosphate + diphosphate. It functions in the pathway cofactor biosynthesis; molybdopterin biosynthesis. Catalyzes the conversion of (8S)-3',8-cyclo-7,8-dihydroguanosine 5'-triphosphate to cyclic pyranopterin monophosphate (cPMP). The polypeptide is Cyclic pyranopterin monophosphate synthase (Methylobacterium sp. (strain 4-46)).